The following is a 102-amino-acid chain: Large ribosomal subunit protein bL21 (102 aa).

It belongs to the bacterial ribosomal protein bL21 family. As to quaternary structure, part of the 50S ribosomal subunit. Contacts protein L20.

Functionally, this protein binds to 23S rRNA in the presence of protein L20. The sequence is that of Large ribosomal subunit protein bL21 from Sorangium cellulosum (strain So ce56) (Polyangium cellulosum (strain So ce56)).